The following is a 75-amino-acid chain: ORF2p protein (75 aa).

The interval 13 to 18 (WIGHPV) is important for viral replication in intestinal cells. Residues 23–45 (IVYLFVGFTPLTLETLHTLNYII) are membrane-embedded. The segment at 53–75 (APRSPHSDPARMRIPTQPRKAPL) is disordered.

It localises to the host cytoplasmic vesicle membrane. Facilitates virus release from intestinal cells in vitro, possibly through the host autophagic pathway. The protein is ORF2p protein of Human enterovirus 71 (strain USA/BrCr/1970) (EV71).